A 186-amino-acid polypeptide reads, in one-letter code: Ribosome-recycling factor (186 aa).

Belongs to the RRF family.

It is found in the cytoplasm. In terms of biological role, responsible for the release of ribosomes from messenger RNA at the termination of protein biosynthesis. May increase the efficiency of translation by recycling ribosomes from one round of translation to another. The polypeptide is Ribosome-recycling factor (Rubrobacter xylanophilus (strain DSM 9941 / JCM 11954 / NBRC 16129 / PRD-1)).